Here is a 290-residue protein sequence, read N- to C-terminus: ATP synthase gamma chain (290 aa).

It belongs to the ATPase gamma chain family. F-type ATPases have 2 components, CF(1) - the catalytic core - and CF(0) - the membrane proton channel. CF(1) has five subunits: alpha(3), beta(3), gamma(1), delta(1), epsilon(1). CF(0) has three main subunits: a, b and c.

The protein resides in the cell inner membrane. Functionally, produces ATP from ADP in the presence of a proton gradient across the membrane. The gamma chain is believed to be important in regulating ATPase activity and the flow of protons through the CF(0) complex. This Anaeromyxobacter sp. (strain Fw109-5) protein is ATP synthase gamma chain.